The primary structure comprises 736 residues: DNA ligase (736 aa).

NAD(+)-binding positions include 41–45 (DQEYD), 91–92 (SL), and Glu125. Lys127 functions as the N6-AMP-lysine intermediate in the catalytic mechanism. Arg148 contacts NAD(+). Residues 170–205 (ELTPLPLAGGAGGGPLDDSGSAPTPDPSRRREGKWN) form a disordered region. Residues Glu215, Lys347, and Lys371 each contribute to the NAD(+) site. Zn(2+)-binding residues include Cys463, Cys466, Cys481, and Cys487. Positions 656–736 (TLDSPVAGKT…GWAEIVAAAG (81 aa)) constitute a BRCT domain.

It belongs to the NAD-dependent DNA ligase family. LigA subfamily. Requires Mg(2+) as cofactor. Mn(2+) serves as cofactor.

The enzyme catalyses NAD(+) + (deoxyribonucleotide)n-3'-hydroxyl + 5'-phospho-(deoxyribonucleotide)m = (deoxyribonucleotide)n+m + AMP + beta-nicotinamide D-nucleotide.. Functionally, DNA ligase that catalyzes the formation of phosphodiester linkages between 5'-phosphoryl and 3'-hydroxyl groups in double-stranded DNA using NAD as a coenzyme and as the energy source for the reaction. It is essential for DNA replication and repair of damaged DNA. The protein is DNA ligase of Erythrobacter litoralis (strain HTCC2594).